Consider the following 156-residue polypeptide: Small ribosomal subunit protein uS7 (156 aa).

The protein belongs to the universal ribosomal protein uS7 family. As to quaternary structure, part of the 30S ribosomal subunit. Contacts proteins S9 and S11.

Its function is as follows. One of the primary rRNA binding proteins, it binds directly to 16S rRNA where it nucleates assembly of the head domain of the 30S subunit. Is located at the subunit interface close to the decoding center, probably blocks exit of the E-site tRNA. This Paraburkholderia phymatum (strain DSM 17167 / CIP 108236 / LMG 21445 / STM815) (Burkholderia phymatum) protein is Small ribosomal subunit protein uS7.